The primary structure comprises 645 residues: 1,4-alpha-glucan branching enzyme GlgB (645 aa).

Asp309 acts as the Nucleophile in catalysis. Glu352 functions as the Proton donor in the catalytic mechanism. The segment at 619 to 645 (VKTRKGSKKQDGSKTKVRSNVTSRGKR) is disordered. Residues 636–645 (RSNVTSRGKR) show a composition bias toward polar residues.

Belongs to the glycosyl hydrolase 13 family. GlgB subfamily. In terms of assembly, monomer.

The enzyme catalyses Transfers a segment of a (1-&gt;4)-alpha-D-glucan chain to a primary hydroxy group in a similar glucan chain.. It functions in the pathway glycan biosynthesis; glycogen biosynthesis. Catalyzes the formation of the alpha-1,6-glucosidic linkages in glycogen by scission of a 1,4-alpha-linked oligosaccharide from growing alpha-1,4-glucan chains and the subsequent attachment of the oligosaccharide to the alpha-1,6 position. This Bacillus cereus (strain Q1) protein is 1,4-alpha-glucan branching enzyme GlgB.